We begin with the raw amino-acid sequence, 513 residues long: Xylose import ATP-binding protein XylG (513 aa).

ABC transporter domains are found at residues 5-242 (LEMK…VGRE) and 259-505 (LRIE…LRSE). 37-44 (GENGSGKS) lines the ATP pocket.

It belongs to the ABC transporter superfamily. Xylose importer (TC 3.A.1.2.4) family. The complex is composed of two ATP-binding proteins (XylG), two transmembrane proteins (XylH) and a solute-binding protein (XylF).

The protein resides in the cell inner membrane. It carries out the reaction D-xylose(out) + ATP + H2O = D-xylose(in) + ADP + phosphate + H(+). Its function is as follows. Part of the ABC transporter complex XylFGH involved in xylose import. Responsible for energy coupling to the transport system. The chain is Xylose import ATP-binding protein XylG from Escherichia coli O6:K15:H31 (strain 536 / UPEC).